The chain runs to 259 residues: Ribosomal RNA small subunit methyltransferase J (259 aa).

S-adenosyl-L-methionine is bound by residues 101–102, 117–118, 153–154, and aspartate 176; these read RD, ER, and SS.

This sequence belongs to the methyltransferase superfamily. RsmJ family.

The protein resides in the cytoplasm. The catalysed reaction is guanosine(1516) in 16S rRNA + S-adenosyl-L-methionine = N(2)-methylguanosine(1516) in 16S rRNA + S-adenosyl-L-homocysteine + H(+). Functionally, specifically methylates the guanosine in position 1516 of 16S rRNA. The protein is Ribosomal RNA small subunit methyltransferase J of Vibrio vulnificus (strain YJ016).